Reading from the N-terminus, the 794-residue chain is Phosphoribosylformylglycinamidine synthase subunit PurL (794 aa).

Histidine 47 is an active-site residue. ATP is bound by residues tyrosine 50 and lysine 89. Residue glutamate 91 participates in Mg(2+) binding. Substrate is bound by residues 92–95 and arginine 114; that span reads SHNH. Histidine 93 (proton acceptor) is an active-site residue. Residue aspartate 115 coordinates Mg(2+). Residue glutamine 238 participates in substrate binding. Aspartate 266 serves as a coordination point for Mg(2+). 310-312 lines the substrate pocket; it reads ESQ. The ATP site is built by aspartate 522 and glycine 559. Asparagine 560 provides a ligand contact to Mg(2+). Residue serine 562 participates in substrate binding.

This sequence belongs to the FGAMS family. In terms of assembly, monomer. Part of the FGAM synthase complex composed of 1 PurL, 1 PurQ and 2 PurS subunits.

Its subcellular location is the cytoplasm. It carries out the reaction N(2)-formyl-N(1)-(5-phospho-beta-D-ribosyl)glycinamide + L-glutamine + ATP + H2O = 2-formamido-N(1)-(5-O-phospho-beta-D-ribosyl)acetamidine + L-glutamate + ADP + phosphate + H(+). It functions in the pathway purine metabolism; IMP biosynthesis via de novo pathway; 5-amino-1-(5-phospho-D-ribosyl)imidazole from N(2)-formyl-N(1)-(5-phospho-D-ribosyl)glycinamide: step 1/2. Functionally, part of the phosphoribosylformylglycinamidine synthase complex involved in the purines biosynthetic pathway. Catalyzes the ATP-dependent conversion of formylglycinamide ribonucleotide (FGAR) and glutamine to yield formylglycinamidine ribonucleotide (FGAM) and glutamate. The FGAM synthase complex is composed of three subunits. PurQ produces an ammonia molecule by converting glutamine to glutamate. PurL transfers the ammonia molecule to FGAR to form FGAM in an ATP-dependent manner. PurS interacts with PurQ and PurL and is thought to assist in the transfer of the ammonia molecule from PurQ to PurL. This is Phosphoribosylformylglycinamidine synthase subunit PurL from Prochlorococcus marinus (strain MIT 9303).